Consider the following 544-residue polypeptide: 4-coumarate:CoA ligase 1 (544 aa).

It belongs to the ATP-dependent AMP-binding enzyme family. In terms of assembly, monomer. As to expression, mostly expressed in flower organs, with highest levels in corollas, and, to a lesser extent, in tubes, sepals, pistils, stamen and ovaries. Also present at low levels in leaves.

It localises to the cytoplasm. The protein localises to the cytosol. The enzyme catalyses (E)-4-coumarate + ATP + CoA = (E)-4-coumaroyl-CoA + AMP + diphosphate. The catalysed reaction is (E)-caffeate + ATP + CoA = (E)-caffeoyl-CoA + AMP + diphosphate. It carries out the reaction benzoate + ATP + CoA = benzoyl-CoA + AMP + diphosphate. It catalyses the reaction (E)-cinnamate + ATP + CoA = (E)-cinnamoyl-CoA + AMP + diphosphate. The enzyme catalyses (E)-ferulate + ATP + CoA = (E)-feruloyl-CoA + AMP + diphosphate. The protein operates within phenylpropanoid metabolism; trans-cinnamate biosynthesis. Its pathway is phytoalexin biosynthesis; 3,4',5-trihydroxystilbene biosynthesis; 3,4',5-trihydroxystilbene from trans-4-coumarate: step 1/2. Catalyzes the formation of CoA esters of trans-cinnamic acid, 4-coumaric acid, ferulic acid, benzoic acid and caffeic acid. The sequence is that of 4-coumarate:CoA ligase 1 from Petunia hybrida (Petunia).